A 345-amino-acid chain; its full sequence is G-protein coupled receptor str-33 (345 aa).

Over 1-11 the chain is Extracellular; sequence MTVNLRDLSRT. Residues 12 to 32 form a helical membrane-spanning segment; that stretch reads IAEFAFLTALVCNSLLIYLTA. Topologically, residues 33-37 are cytoplasmic; it reads RRTKN. The helical transmembrane segment at 38 to 58 threads the bilayer; the sequence is ITGAYKYMIILFALLGLIFSC. Residues 59 to 92 lie on the Extracellular side of the membrane; it reads TEMLARPFVHNFNASFVYFSLSNDLSEFKSLVQM. A glycan (N-linked (GlcNAc...) asparagine) is linked at N71. Residues 93–113 traverse the membrane as a helical segment; the sequence is LLVLYSGLYSSLISFVAVQFI. The Cytoplasmic portion of the chain corresponds to 114 to 133; it reads YRYMVLVNANLLESWFTGWK. A helical transmembrane segment spans residues 134–154; sequence LVFWVFYVIFFGFAWSASVYF. Topologically, residues 155–204 are extracellular; it reads CLFPDTYSYNYIRTEFKDVYNIGVDRVAIFILVAYEKHPSSEEYKLRPAS. A helical membrane pass occupies residues 205–225; it reads VIMIAGTISILVIQYSIMLFC. Over 226–258 the chain is Cytoplasmic; the sequence is GASMHRQMNEKLKNFSPDNQRLQKQFFKTLLLQ. A helical transmembrane segment spans residues 259–279; it reads ISVPTVLFHMPIFPVLLGPFF. Over 280 to 288 the chain is Extracellular; the sequence is NFEISAESG. Residues 289–309 traverse the membrane as a helical segment; that stretch reads IIYSLFSLYPPIDGLIIMTVV. The Cytoplasmic portion of the chain corresponds to 310-345; the sequence is TDYRIALTELFLGSHSGAQVEVIPVEVVSILNFSLL.

This sequence belongs to the nematode receptor-like protein str family. Detected in ALM and PLM mechanosensory neurons and head neurons.

The protein localises to the cell membrane. Regulates egg-laying and locomotion. Likely to act upstream of goa-1 to suppress 5-hydroxytryptamine (5-HT) biosynthesis in hermaphrodite-specific neurons (HSNs) through inhibition of tph-1 transcription. This is G-protein coupled receptor str-33 from Caenorhabditis elegans.